The chain runs to 93 residues: Large ribosomal subunit protein bL27 (93 aa).

Positions 1–8 (MIMDLQFF) are excised as a propeptide. Positions 8–29 (FSHHKGGGSTANGRNSAGRRLG) are disordered.

The protein belongs to the bacterial ribosomal protein bL27 family. The N-terminus is cleaved by ribosomal processing cysteine protease Prp.

In Limosilactobacillus fermentum (strain NBRC 3956 / LMG 18251) (Lactobacillus fermentum), this protein is Large ribosomal subunit protein bL27.